The following is a 41-amino-acid chain: Large ribosomal subunit protein bL36 (41 aa).

This sequence belongs to the bacterial ribosomal protein bL36 family.

The polypeptide is Large ribosomal subunit protein bL36 (Methylocella silvestris (strain DSM 15510 / CIP 108128 / LMG 27833 / NCIMB 13906 / BL2)).